Here is a 254-residue protein sequence, read N- to C-terminus: AA9 family lytic polysaccharide monooxygenase A (254 aa).

Positions 1-19 (MKYSILGLTALSFVASAAA) are cleaved as a signal peptide. Residue H20 coordinates Cu(2+). The residue at position 20 (H20) is a Methylhistidine. V28 lines the (1,4-beta-D-glucosyl)n pocket. The N-linked (GlcNAc...) asparagine glycan is linked to N52. The cysteines at positions 60 and 186 are disulfide-linked. (1,4-beta-D-glucosyl)n-binding residues include V66, V67, D77, and N86. A Cu(2+)-binding site is contributed by H97. The N-linked (GlcNAc...) asparagine glycan is linked to N129. Residues V148 and R159 each contribute to the (1,4-beta-D-glucosyl)n site. O2 contacts are provided by H166 and Q181. Y183 serves as a coordination point for Cu(2+).

The protein belongs to the polysaccharide monooxygenase AA9 family. Cu(2+) is required as a cofactor. Post-translationally, the catalytically essential N-terminal histidine His-20 is post-translationally modified by methylation to prevent protonation of the histidine side chain, and protect the critical active site of the enzyme from oxidative damage.

It localises to the secreted. The catalysed reaction is [(1-&gt;4)-beta-D-glucosyl]n+m + reduced acceptor + O2 = 4-dehydro-beta-D-glucosyl-[(1-&gt;4)-beta-D-glucosyl]n-1 + [(1-&gt;4)-beta-D-glucosyl]m + acceptor + H2O.. The polyphenol cinnamtannin B1 contained in methanolic extract of Cinnamomum cassia (cinnamon) acts as an inhibitor of catalytic activity. Its function is as follows. Lytic polysaccharide monooxygenase (LPMO) that depolymerizes crystalline and amorphous polysaccharides via the oxidation of scissile alpha- or beta-(1-4)-glycosidic bonds, yielding C1 or C4 oxidation product. Catalysis by LPMOs requires the reduction of the active-site copper from Cu(II) to Cu(I) by a reducing agent and H(2)O(2) or O(2) as a cosubstrate. Is able to cleave phosphoric acid swollen cellulose (PASC) in the presence of a reducing agent, yielding a range of cellooligosaccharides dominated by cellobiose and cellotriose. Activity is less sensitive to the reducing agent potential when cleaving xylan, suggesting that distinct catalytic mechanisms exist for xylan and glucan cleavage. This chain is AA9 family lytic polysaccharide monooxygenase A, found in Panus similis (Lentinoid fungus).